We begin with the raw amino-acid sequence, 244 residues long: Trypsin (244 aa).

Residues Met1–Ala15 form the signal peptide. Residues Phe16 to Lys21 constitute a propeptide, activation peptide. The region spanning Ile22 to Ser242 is the Peptidase S1 domain. Disulfide bonds link Cys28-Cys158, Cys46-Cys62, Cys130-Cys231, Cys137-Cys204, Cys169-Cys183, and Cys194-Cys218. His61 (charge relay system) is an active-site residue. Ca(2+)-binding residues include Glu73, Asn75, and Glu83. Catalysis depends on Asp105, which acts as the Charge relay system. Catalysis depends on Ser198, which acts as the Charge relay system.

The protein belongs to the peptidase S1 family. The cofactor is Ca(2+).

It localises to the secreted. The protein resides in the extracellular space. The catalysed reaction is Preferential cleavage: Arg-|-Xaa, Lys-|-Xaa.. In Xenopus laevis (African clawed frog), this protein is Trypsin.